The sequence spans 417 residues: Protein-lysine 6-oxidase (417 aa).

The first 21 residues, 1–21 (MRFAWTVLLLGPLQLCALVHC), serve as a signal peptide directing secretion. Residues 22–168 (APPAAGQQQP…PPSRVDGMVG (147 aa)) constitute a propeptide, removed by BMP1. The disordered stretch occupies residues 64 to 89 (YQPQRRRDPGAAVPGAANASAQQPRT). The span at 73–84 (GAAVPGAANASA) shows a compositional bias: low complexity. Residues N81, N97, and N144 are each glycosylated (N-linked (GlcNAc...) asparagine). A disordered region spans residues 137–174 (AGASRAENQTAPGEVPALSNLRPPSRVDGMVGDDPYNP). Y187 carries the post-translational modification Sulfotyrosine. The interval 213–417 (PDLVADPYYI…YASGCTISPY (205 aa)) is lysyl-oxidase like. 5 disulfide bridges follow: C238/C244, C291/C340, C324/C330, C351/C361, and C398/C412. Residues H292, H294, and H296 each contribute to the Cu cation site. A cross-link (lysine tyrosylquinone (Lys-Tyr)) is located at residues 320 to 355 (KASFCLEDTSCDYGYHRRFACTAHTQGLSPGCYDTY). The residue at position 355 (Y355) is a 2',4',5'-topaquinone.

The protein belongs to the lysyl oxidase family. As to quaternary structure, interacts with MFAP4. Interacts (via propeptide) with EFEMP2; this interaction is strong and facilitates formation of ternary complexes with ELN during elastic fiber assembly; this interaction limits interaction of EFEMP2 with FBLN5. It depends on Cu cation as a cofactor. Lysine tyrosylquinone residue is required as a cofactor. The lysine tyrosylquinone cross-link (LTQ) is generated by condensation of the epsilon-amino group of a lysine with a topaquinone produced by oxidation of tyrosine. Post-translationally, proteolytically cleaved by BMP1 which removes the propeptide. Also proteolytically cleaved by ADAMTS2 and ADAMTS14, but not by ADAMTS3, at an additional cleavage site downstream of the BMP1 cleavage site. The propeptide plays a role in directing the deposition of this enzyme to elastic fibers, via interaction with tropoelastin. Cleavage by BMP1 to remove the propeptide does not increase enzymatic activity but increases binding to collagen. Cleavage by ADAMTS2 produces a form with reduced collagen-binding activity. In terms of processing, sulfated at Tyr-187 and also at either Tyr-183 or Tyr-184 which enhances binding to collagen. In terms of tissue distribution, heart, placenta, skeletal muscle, kidney, lung and pancreas.

The protein localises to the secreted. It localises to the extracellular space. It catalyses the reaction L-lysyl-[protein] + O2 + H2O = (S)-2-amino-6-oxohexanoyl-[protein] + H2O2 + NH4(+). In terms of biological role, responsible for the post-translational oxidative deamination of peptidyl lysine residues in precursors to fibrous collagen and elastin. Regulator of Ras expression. May play a role in tumor suppression. Plays a role in the aortic wall architecture. This chain is Protein-lysine 6-oxidase (LOX), found in Homo sapiens (Human).